The sequence spans 432 residues: Luc7-like protein 3 (432 aa).

At M1 the chain carries N-acetylmethionine. 3 positions are modified to phosphoserine: S3, S110, and S115. Positions 124 to 181 (KNEEKIQVLTDKIDVLLQQIEELGSEGKVEEAQGMMKLVEQLKEERELLRSTTSTIES) form a coiled coil. Position 231 is an N6-acetyllysine (K231). Residues 234–287 (LRKRTEEPDRDERLKKEKQEREEREKEREREREERERKRRREEEEREKERARDR) show a composition bias toward basic and acidic residues. The disordered stretch occupies residues 234–432 (LRKRTEEPDR…IKSEGDTQSN (199 aa)). Basic residues predominate over residues 288–301 (ERRKRSRSRSRHSS). A compositionally biased stretch (basic and acidic residues) spans 302–311 (RTSDRRCSRS). Residues 312 to 367 (RDHKRSRSRERRRSRSRDRRRSRSHDRSERKHRSRSRDRRRSKSRDRKSYKHRSKS) show a composition bias toward basic residues. The span at 368 to 414 (RDREQDRKSKEKEKRGSDDKKSSVKSGSREKQSEDTNTESKESDTKN) shows a compositional bias: basic and acidic residues. S420 is modified (phosphoserine). Residues 421-432 (EDIKSEGDTQSN) are compositionally biased toward basic and acidic residues. Residue K424 forms a Glycyl lysine isopeptide (Lys-Gly) (interchain with G-Cter in SUMO1); alternate linkage. A Glycyl lysine isopeptide (Lys-Gly) (interchain with G-Cter in SUMO2); alternate cross-link involves residue K424. 2 positions are modified to phosphoserine: S425 and S431.

The protein belongs to the Luc7 family. May interact with SFRS1 and form homodimers. Interacts with JMJD6. Interacts with RBM25. Interacts with RSRC1 (via Arg/Ser-rich domain). Interacts with RRP1B. Post-translationally, phosphorylated in vitro by SRPK1, SRPK2 and CLK1. Widely expressed. Highest levels in heart, brain, pancreas, thymus, ovary, small intestine and peripheral blood leukocytes, as well as cerebellum, putamen and pituitary gland. Lowest levels in lung, liver and kidney. Also expressed in fetal tissues, including brain, heart, kidney, thymus and lung.

The protein resides in the nucleus speckle. In terms of biological role, binds cAMP regulatory element DNA sequence. May play a role in RNA splicing. The chain is Luc7-like protein 3 (LUC7L3) from Homo sapiens (Human).